The chain runs to 139 residues: Large ribosomal subunit protein uL16 (139 aa).

The protein belongs to the universal ribosomal protein uL16 family. In terms of assembly, part of the 50S ribosomal subunit.

In terms of biological role, binds 23S rRNA and is also seen to make contacts with the A and possibly P site tRNAs. The polypeptide is Large ribosomal subunit protein uL16 (Rippkaea orientalis (strain PCC 8801 / RF-1) (Cyanothece sp. (strain PCC 8801))).